The following is a 355-amino-acid chain: Iron deficiency-induced protein A (355 aa).

The tat-type signal signal peptide spans 1–34 (MEKVGRRVFLGMGAAATAYVTHHLWNQNAESSYA). Positions 49, 50, 180, 236, and 237 each coordinate Fe cation.

It belongs to the bacterial solute-binding protein 1 family. In terms of processing, predicted to be exported by the Tat system. The position of the signal peptide cleavage has not been experimentally proven.

The protein localises to the cellular thylakoid membrane. Functionally, plays an important role in protecting the acceptor side of photosystem II (PSII) against oxidative damage, especially under iron-limiting growth conditions. In terms of biological role, may also be part of a periplasmic ABC transporter complex involved in iron import. This chain is Iron deficiency-induced protein A (idiA), found in Thermosynechococcus vestitus (strain NIES-2133 / IAM M-273 / BP-1).